Reading from the N-terminus, the 322-residue chain is Arginase-1 (322 aa).

The residue at position 17 (Lys-17) is an N6-succinyllysine. A phosphoserine mark is found at Ser-62 and Ser-72. An N6-succinyllysine modification is found at Lys-75. Mn(2+) contacts are provided by His-101, Asp-124, His-126, and Asp-128. Residues 126-130 (HTDIN) and 137-139 (SGN) each bind substrate. Position 163 is a phosphoserine (Ser-163). A substrate-binding site is contributed by Asp-183. Residue Ser-217 is modified to Phosphoserine. Mn(2+)-binding residues include Asp-232 and Asp-234. 2 residues coordinate substrate: Thr-246 and Glu-277.

The protein belongs to the arginase family. In terms of assembly, homotrimer. Interacts with CMTM6. The cofactor is Mn(2+). As to expression, within the immune system initially reported to be selectively expressed in granulocytes (polymorphonuclear leukocytes [PMNs]). Also detected in macrophages mycobacterial granulomas. Expressed in group2 innate lymphoid cells (ILC2s) during lung disease.

It is found in the cytoplasm. The protein localises to the cytoplasmic granule. The enzyme catalyses L-arginine + H2O = urea + L-ornithine. It participates in nitrogen metabolism; urea cycle; L-ornithine and urea from L-arginine: step 1/1. Its function is as follows. Key element of the urea cycle converting L-arginine to urea and L-ornithine, which is further metabolized into metabolites proline and polyamides that drive collagen synthesis and bioenergetic pathways critical for cell proliferation, respectively; the urea cycle takes place primarily in the liver and, to a lesser extent, in the kidneys. In terms of biological role, functions in L-arginine homeostasis in nonhepatic tissues characterized by the competition between nitric oxide synthase (NOS) and arginase for the available intracellular substrate arginine. Arginine metabolism is a critical regulator of innate and adaptive immune responses. Involved in an antimicrobial effector pathway in polymorphonuclear granulocytes (PMN). Upon PMN cell death is liberated from the phagolysosome and depletes arginine in the microenvironment leading to suppressed T cell and natural killer (NK) cell proliferation and cytokine secretion. In group 2 innate lymphoid cells (ILC2s) promotes acute type 2 inflammation in the lung and is involved in optimal ILC2 proliferation but not survival. In humans, the immunological role in the monocytic/macrophage/dendritic cell (DC) lineage is unsure. The chain is Arginase-1 (ARG1) from Homo sapiens (Human).